A 245-amino-acid polypeptide reads, in one-letter code: MACTNDGPNKYPEIVSVKHLFQHSGSKHEFSAGKRFSKSIGKIFKRNSALKTSRTETANHKMELKKREGVTLLPPVPESLLHKLNSWLETFSSTKNMKIEENKIVINEKEIRDSVSYYPDKNGGSAVFCYLPDLVLYYKPPIKVTGKQCPIKRSPWESMEIQYQKFMYPLERLERQFEEVPFRPWYFAMRLKELYRCCERSFTNAANRGKARLLRGKQRTKKSYHKTVNLVSAKISTHSNAPSPG.

Involved in spore and ascus formation. Required for the efficient assembly of the precursors of the prospore membrane to a continuous prospore membrane. This Saccharomyces cerevisiae (strain ATCC 204508 / S288c) (Baker's yeast) protein is Spore membrane assembly protein 1 (SMA1).